A 276-amino-acid polypeptide reads, in one-letter code: Diaminopimelate epimerase (276 aa).

3 residues coordinate substrate: asparagine 13, glutamine 46, and asparagine 66. Cysteine 75 (proton donor) is an active-site residue. Substrate-binding positions include 76–77 (GN), asparagine 159, asparagine 192, and 210–211 (ER). Cysteine 219 acts as the Proton acceptor in catalysis. Residue 220-221 (GT) coordinates substrate.

This sequence belongs to the diaminopimelate epimerase family. As to quaternary structure, homodimer.

It is found in the cytoplasm. It carries out the reaction (2S,6S)-2,6-diaminopimelate = meso-2,6-diaminopimelate. It participates in amino-acid biosynthesis; L-lysine biosynthesis via DAP pathway; DL-2,6-diaminopimelate from LL-2,6-diaminopimelate: step 1/1. Its function is as follows. Catalyzes the stereoinversion of LL-2,6-diaminopimelate (L,L-DAP) to meso-diaminopimelate (meso-DAP), a precursor of L-lysine and an essential component of the bacterial peptidoglycan. This Pseudomonas fluorescens protein is Diaminopimelate epimerase.